Here is a 165-residue protein sequence, read N- to C-terminus: Large ribosomal subunit protein uL10 (165 aa).

Belongs to the universal ribosomal protein uL10 family. Part of the ribosomal stalk of the 50S ribosomal subunit. The N-terminus interacts with L11 and the large rRNA to form the base of the stalk. The C-terminus forms an elongated spine to which L12 dimers bind in a sequential fashion forming a multimeric L10(L12)X complex.

In terms of biological role, forms part of the ribosomal stalk, playing a central role in the interaction of the ribosome with GTP-bound translation factors. In Pectobacterium atrosepticum (strain SCRI 1043 / ATCC BAA-672) (Erwinia carotovora subsp. atroseptica), this protein is Large ribosomal subunit protein uL10.